We begin with the raw amino-acid sequence, 628 residues long: Glutamyl-tRNA(Gln) amidotransferase subunit E (628 aa).

This sequence belongs to the GatB/GatE family. GatE subfamily. Heterodimer of GatD and GatE.

It carries out the reaction L-glutamyl-tRNA(Gln) + L-glutamine + ATP + H2O = L-glutaminyl-tRNA(Gln) + L-glutamate + ADP + phosphate + H(+). Functionally, allows the formation of correctly charged Gln-tRNA(Gln) through the transamidation of misacylated Glu-tRNA(Gln) in organisms which lack glutaminyl-tRNA synthetase. The reaction takes place in the presence of glutamine and ATP through an activated gamma-phospho-Glu-tRNA(Gln). The GatDE system is specific for glutamate and does not act on aspartate. The polypeptide is Glutamyl-tRNA(Gln) amidotransferase subunit E (Thermococcus gammatolerans (strain DSM 15229 / JCM 11827 / EJ3)).